The primary structure comprises 178 residues: Large ribosomal subunit protein bL17 (178 aa).

Composition is skewed to low complexity over residues 123-139 and 151-160; these read KAPA…NTAT and EDAAAQAPVA. The disordered stretch occupies residues 123 to 178; sequence KAPASAADAKAQINTATEAKEAEPEAPAEDAAAQAPVADEQKAAEVDEKAEEKPEA. The segment covering 161–178 has biased composition (basic and acidic residues); sequence DEQKAAEVDEKAEEKPEA.

The protein belongs to the bacterial ribosomal protein bL17 family. Part of the 50S ribosomal subunit. Contacts protein L32.

The sequence is that of Large ribosomal subunit protein bL17 from Cutibacterium acnes (strain DSM 16379 / KPA171202) (Propionibacterium acnes).